The chain runs to 247 residues: UPF0259 membrane protein BUAP5A_271 (247 aa).

A run of 6 helical transmembrane segments spans residues 20-40, 85-105, 114-134, 137-157, 188-208, and 218-238; these read IGAI…IDMF, IMES…LISV, IVSS…LNFL, FIIQ…SIIL, IIGP…MLLA, and LFLI…IYLF.

This sequence belongs to the UPF0259 family.

Its subcellular location is the cell membrane. The polypeptide is UPF0259 membrane protein BUAP5A_271 (Buchnera aphidicola subsp. Acyrthosiphon pisum (strain 5A)).